Reading from the N-terminus, the 590-residue chain is MLKLTKKQLIIVLGIAIVVVSAIGYAVYTQYFNEDKLEISYTAFLESTEAGEIRTVNLSEGPKLTGVFEDGKQFITDHPRTDSLKENLLLHGIQVRETTDQYSVVQVITFVVLIGGFIGVAIFLSKKNATQTSKEYDKMSDVEFSTQKDSSIRFADIAGNQEAKENAMELVDFLKNPEKYSRYGAKMPKGVILYGSPGTGKTLLARALASEAGVEFLAVSGSDFVQVYAGLGAGRIRNLFKKAKDKGKCVIFIDEIDAIGKKRDRGGLGGSDESDRTLNALLTEMSGFKGSEGIIVMAATNRLDILDDALLRPGRFDRQIEIGLPDLKARQDILQLYTQNRPIDPKVCLRGIAQQTVYFSGAKLENLMNEAAIYAAREEADFITEGHIDKAFYTVVAGEEKKDRSNIQPIDRKITAYHEAGHAVATKLLCPQNKVTKVTIIPSTKGAGGFSMNIPPDQMYHTKNSMVNSIKVALSGRIIEEIVFGPDFVTTGASNDIQKATEILGAMIKQFGMNDEVGMINYDVLFGRQGACDQRVMELTKLNMKRLYDETKVLLEKSLNIVEAVAEDLLIKETLKEDEINEIFSGFQSM.

Over 1–8 (MLKLTKKQ) the chain is Cytoplasmic. Residues 9-29 (LIIVLGIAIVVVSAIGYAVYT) traverse the membrane as a helical segment. Residues 30 to 103 (QYFNEDKLEI…QVRETTDQYS (74 aa)) lie on the Extracellular side of the membrane. A helical transmembrane segment spans residues 104 to 124 (VVQVITFVVLIGGFIGVAIFL). At 125-590 (SKKNATQTSK…NEIFSGFQSM (466 aa)) the chain is on the cytoplasmic side. 195–202 (GSPGTGKT) contributes to the ATP binding site. His418 contacts Zn(2+). The active site involves Glu419. Zn(2+) is bound by residues His422 and Asp496.

In the central section; belongs to the AAA ATPase family. It in the C-terminal section; belongs to the peptidase M41 family. Homohexamer. Zn(2+) is required as a cofactor.

The protein resides in the cell membrane. In terms of biological role, acts as a processive, ATP-dependent zinc metallopeptidase for both cytoplasmic and membrane proteins. Plays a role in the quality control of integral membrane proteins. The protein is ATP-dependent zinc metalloprotease FtsH 1 of Alkaliphilus metalliredigens (strain QYMF).